The following is a 272-amino-acid chain: Glutamate racemase (272 aa).

Substrate contacts are provided by residues 13–14 and 45–46; these read DS and YG. The active-site Proton donor/acceptor is the cysteine 76. 77-78 contributes to the substrate binding site; it reads NT. The Proton donor/acceptor role is filled by cysteine 186. 187 to 188 provides a ligand contact to substrate; the sequence is TH.

Belongs to the aspartate/glutamate racemases family.

The catalysed reaction is L-glutamate = D-glutamate. Its pathway is cell wall biogenesis; peptidoglycan biosynthesis. Functionally, provides the (R)-glutamate required for cell wall biosynthesis. The protein is Glutamate racemase of Cupriavidus pinatubonensis (strain JMP 134 / LMG 1197) (Cupriavidus necator (strain JMP 134)).